We begin with the raw amino-acid sequence, 724 residues long: NAD(+) hydrolase SARM1 (724 aa).

The N-terminal 27 residues, 1–27 (MVLTLLLSAYKLCRFFAMSGPRPGAER), are a transit peptide targeting the mitochondrion. An ARM 1 repeat occupies 60–100 (EVQDALERALPELQQALSALKQAGGARAVGAGLAEVFQLVE). NAD(+) contacts are provided by residues Trp-103, Arg-110, 149–157 (EQILVAENR), and 190–193 (HMFK). ARM repeat units lie at residues 114–153 (QGLC…QILV), 155–193 (ENRD…HMFK), 196–235 (EETC…NCAL), 237–280 (GGQA…LATN), 281–314 (KEVE…CLVD), 315–354 (ASDT…AEAA), and 359–402 (QGKT…EEVP). 2 consecutive SAM domains span residues 412-476 (WKEA…LKTF) and 486-548 (NLAD…MLHS). Residues Ser-548 and Ser-558 each carry the phosphoserine modification. A TIR domain is found at 560 to 703 (DTPDVFISYR…KIIRFLQGRS (144 aa)). NAD(+) contacts are provided by residues 569-570 (RR) and Glu-599. Glu-642 is an active-site residue. The interval 704–724 (SRDSSAGSDTSLEGAAPMGPT) is disordered.

It belongs to the SARM1 family. Homooctamer; forms an octameric ring via SAM domains. Interacts with TICAM1/TRIF and thereby interferes with TICAM1/TRIF function. Interacts with MAPK10/JNK3 and SDC2 (via cytoplasmic domain). Phosphorylation at Ser-548 by JNK kinases (MAPK8, MAPK9 and /or MAPK10) enhance the NAD(+) hydrolase (NADase) activity. Phosphorylation at Ser-548 and subsequent activation takes place in response to oxidative stress conditions and inhibits mitochondrial respiration. In terms of tissue distribution, predominantly expressed in brain, kidney and liver. Expressed at lower level in placenta.

The protein localises to the cytoplasm. Its subcellular location is the cell projection. It localises to the axon. The protein resides in the dendrite. It is found in the synapse. The protein localises to the mitochondrion. The catalysed reaction is NAD(+) + H2O = ADP-D-ribose + nicotinamide + H(+). The enzyme catalyses NAD(+) = cyclic ADP-beta-D-ribose + nicotinamide + H(+). It carries out the reaction NADP(+) + H2O = ADP-D-ribose 2'-phosphate + nicotinamide + H(+). Autoinhibited: in the inactive state, the enzymatic TIR domain is held apart by the autoinhibiting ARM repeats. NAD(+)-binding to ARM repeats maintains an inactive state by promoting interaction between ARM repeats and the TIR domain, thereby facilitating inhibition of the enzymatic TIR domain. Following activation, possibly by nicotinamide mononucleotide (NMN), auto-inhibitory interactions are released, allowing self-association of the TIR domains and subsequent activation of the NAD(+) hydrolase (NADase) activity. Self-association of TIR domains is facilitated by the octamer of SAM domains. NAD(+) hydrolase activity is inhibited by nicotinamide. Specifically inhibited by berberine chloride and zinc chloride. In terms of biological role, NAD(+) hydrolase, which plays a key role in axonal degeneration following injury by regulating NAD(+) metabolism. Acts as a negative regulator of MYD88- and TRIF-dependent toll-like receptor signaling pathway by promoting Wallerian degeneration, an injury-induced form of programmed subcellular death which involves degeneration of an axon distal to the injury site. Wallerian degeneration is triggered by NAD(+) depletion: in response to injury, SARM1 is activated and catalyzes cleavage of NAD(+) into ADP-D-ribose (ADPR), cyclic ADPR (cADPR) and nicotinamide; NAD(+) cleavage promoting cytoskeletal degradation and axon destruction. Also able to hydrolyze NADP(+), but not other NAD(+)-related molecules. Can activate neuronal cell death in response to stress. Regulates dendritic arborization through the MAPK4-JNK pathway. Involved in innate immune response: inhibits both TICAM1/TRIF- and MYD88-dependent activation of JUN/AP-1, TRIF-dependent activation of NF-kappa-B and IRF3, and the phosphorylation of MAPK14/p38. This Homo sapiens (Human) protein is NAD(+) hydrolase SARM1.